A 300-amino-acid chain; its full sequence is Probable ABC transporter permease protein YurM (300 aa).

6 helical membrane-spanning segments follow: residues V37–M57, V98–G118, F129–L149, T161–I181, F204–I224, and W264–L284. One can recognise an ABC transmembrane type-1 domain in the interval F94 to M285.

The protein belongs to the binding-protein-dependent transport system permease family. MalFG subfamily.

Its subcellular location is the cell membrane. Probably part of the binding-protein-dependent transport system YurMNO. Probably responsible for the translocation of the substrate across the membrane. The polypeptide is Probable ABC transporter permease protein YurM (yurM) (Bacillus subtilis (strain 168)).